The sequence spans 359 residues: N-acetylhexosamine 1-kinase (359 aa).

One can recognise a Protein kinase domain in the interval 21–359 (VTGIEPYGDG…IVADIMEAAR (339 aa)).

The protein belongs to the protein kinase superfamily. Requires Mg(2+) as cofactor.

It catalyses the reaction N-acetyl-D-hexosamine + ATP = N-acetyl-alpha-D-hexosamine 1-phosphate + ADP + H(+). Its function is as follows. Phosphorylates both N-acetylglucosamine (GlcNAc) and N-acetylgalactosamine (GalNAc) at similar rates. Involved in the lacto-N-biose I/galacto-N-biose (LNB/GNB) degradation pathway, which is important for host intestinal colonization by bifidobacteria. Also accepts GTP and ITP as phosphate donors. In vitro, can phosphorylate several GlcNAc and GalNAc derivatives. This chain is N-acetylhexosamine 1-kinase (nahK), found in Bifidobacterium longum subsp. longum (strain ATCC 15707 / DSM 20219 / JCM 1217 / NCTC 11818 / E194b).